Consider the following 200-residue polypeptide: Ras-related protein RHN1 (200 aa).

GTP is bound by residues glycine 17 to serine 25, leucine 36 to threonine 42, aspartate 65 to glutamine 69, asparagine 123 to aspartate 126, and serine 153 to lysine 155. An Effector region motif is present at residues glutamine 39–phenylalanine 47. Residues cysteine 198 and cysteine 199 are each lipidated (S-geranylgeranyl cysteine).

Belongs to the small GTPase superfamily. Rab family. As to expression, high in stem, root, and inflorescence.

Its subcellular location is the cell membrane. In terms of biological role, protein transport. Probably involved in vesicular traffic. This Nicotiana plumbaginifolia (Leadwort-leaved tobacco) protein is Ras-related protein RHN1 (RHN1).